The primary structure comprises 622 residues: Sodium/potassium/calcium exchanger 4 (622 aa).

The N-terminal stretch at Met-1 to Gly-38 is a signal peptide. Topologically, residues Leu-39–His-97 are extracellular. N-linked (GlcNAc...) asparagine glycosylation is present at Asn-76. A helical membrane pass occupies residues Gly-98–Cys-118. Topologically, residues Asp-119–Ala-142 are cytoplasmic. One copy of the Alpha-1 repeat lies at Val-139 to Phe-179. A helical transmembrane segment spans residues Thr-143 to Ile-163. The Extracellular segment spans residues Thr-164–Thr-172. Residues Ile-173–Gly-193 form a helical membrane-spanning segment. At Gln-194–Trp-200 the chain is on the cytoplasmic side. The helical transmembrane segment at Trp-201–Ile-221 threads the bilayer. The Extracellular portion of the chain corresponds to Tyr-222–Glu-224. A helical transmembrane segment spans residues Glu-225 to Met-245. Over Lys-246–Phe-457 the chain is Cytoplasmic. Positions Ala-358 to Glu-408 are disordered. Residues Gln-394 to Pro-404 are compositionally biased toward pro residues. Residues Ile-458–Ile-478 traverse the membrane as a helical segment. Position 479 (Gly-479) is a topological domain, extracellular. The helical transmembrane segment at Tyr-480–Val-500 threads the bilayer. Residues Ala-495–Asn-526 form an Alpha-2 repeat. Residues Pro-501 to Asn-526 lie on the Cytoplasmic side of the membrane. A helical membrane pass occupies residues Val-527–Tyr-547. The Extracellular portion of the chain corresponds to Gly-548–Gly-557. The helical transmembrane segment at Leu-558 to Leu-578 threads the bilayer. Residues Asn-579–Lys-586 lie on the Cytoplasmic side of the membrane. A helical transmembrane segment spans residues Leu-587–Phe-607. The Extracellular segment spans residues Asn-608–Asp-622.

It belongs to the Ca(2+):cation antiporter (CaCA) (TC 2.A.19) family. SLC24A subfamily. Expressed in late secretory-stage and maturation-stage ameloblasts, with significantly increased expression during the late stages of amelogenesis (at protein level). Widely expressed in most regions of the brain, including hippocampus, neocortex, thalamus, striatum and olfactory bulb. Expressed in the olfactory sensory neurons.

It is found in the cell membrane. The protein resides in the cytoplasm. It carries out the reaction Ca(2+)(out) + K(+)(out) + 4 Na(+)(in) = Ca(2+)(in) + K(+)(in) + 4 Na(+)(out). Calcium, potassium:sodium antiporter that transports 1 Ca(2+) and 1 K(+) in exchange for 4 Na(+). Controls the rapid response termination and proper regulation of adaptation in olfactory sensory neurons (OSNs) which subsequently influences how odor information is encoded and perceived. May play a role in calcium transport during amelogenesis. This is Sodium/potassium/calcium exchanger 4 from Mus musculus (Mouse).